Here is a 341-residue protein sequence, read N- to C-terminus: Heme A synthase (341 aa).

Helical transmembrane passes span 11 to 31 (AVSTWLLVVAALVCAMIIIGG), 101 to 121 (LIGLVYFVPFVFFWMRGHLSA), 127 to 147 (LFGLFLLGGAQGAIGWWMVAS), 160 to 180 (LATHLGMAFVILGLSIWFSLE), and 194 to 214 (AGVTAGLLGLVFVQIILGAFV). His259 provides a ligand contact to heme. The next 3 helical transmembrane spans lie at 261-278 (WTGYLVALGVFAYAWQVW), 288-308 (FMVILPALVIGQIALGIAALL), and 315-335 (LSLAHQAGAILLFIAMVAAAW). A heme-binding site is contributed by His319.

The protein belongs to the COX15/CtaA family. Type 2 subfamily. Interacts with CtaB. Heme b is required as a cofactor.

It is found in the cell membrane. The catalysed reaction is Fe(II)-heme o + 2 A + H2O = Fe(II)-heme a + 2 AH2. The protein operates within porphyrin-containing compound metabolism; heme A biosynthesis; heme A from heme O: step 1/1. Catalyzes the conversion of heme O to heme A by two successive hydroxylations of the methyl group at C8. The first hydroxylation forms heme I, the second hydroxylation results in an unstable dihydroxymethyl group, which spontaneously dehydrates, resulting in the formyl group of heme A. The polypeptide is Heme A synthase (Maricaulis maris (strain MCS10) (Caulobacter maris)).